A 334-amino-acid chain; its full sequence is Phosphate acyltransferase (334 aa).

Belongs to the PlsX family. In terms of assembly, homodimer. Probably interacts with PlsY.

It localises to the cytoplasm. The enzyme catalyses a fatty acyl-[ACP] + phosphate = an acyl phosphate + holo-[ACP]. It functions in the pathway lipid metabolism; phospholipid metabolism. Functionally, catalyzes the reversible formation of acyl-phosphate (acyl-PO(4)) from acyl-[acyl-carrier-protein] (acyl-ACP). This enzyme utilizes acyl-ACP as fatty acyl donor, but not acyl-CoA. This chain is Phosphate acyltransferase, found in Clostridium tetani (strain Massachusetts / E88).